The primary structure comprises 233 residues: uncharacterized protein (233 aa).

Residues 1–10 show a composition bias toward basic residues; it reads MSSKLSKKKL. The interval 1–90 is disordered; it reads MSSKLSKKKL…KRQKGKNNDR (90 aa). Over residues 11 to 56 the composition is skewed to basic and acidic residues; it reads KSLEYRSKKFDKKSQSLEEHEKKVQQKNEELEKKAADKISRDELPE. Residues 76–85 are compositionally biased toward basic residues; sequence KTLKSKRQKG. Residues 92 to 171 enclose the RRM domain; it reads VILFVGNLPK…RKINIELTAG (80 aa). Composition is skewed to basic and acidic residues over residues 194 to 216 and 224 to 233; these read MRQRVASEEQQAGEEKMARKAVA and IHPDRLRLLQ. Residues 194–233 form a disordered region; it reads MRQRVASEEQQAGEEKMARKAVADEGLESGIHPDRLRLLQ.

Its subcellular location is the nucleus. It localises to the nucleolus. This is an uncharacterized protein from Schizosaccharomyces pombe (strain 972 / ATCC 24843) (Fission yeast).